Reading from the N-terminus, the 299-residue chain is NmrA-like family domain-containing protein 1 (299 aa).

NADP(+) contacts are provided by residues 11 to 16, 37 to 41, 58 to 59, glutamine 62, 79 to 81, lysine 92, lysine 133, and 155 to 158; these read GGTGAQ, RNPRK, DQ, TNY, and YFEN. The interaction with ASS1 stretch occupies residues 153–189; sequence PCYFENLLSHFLPQKAPDGKSYLLSLPTGDVPMDGMS.

The protein belongs to the NmrA-type oxidoreductase family. As to quaternary structure, homodimer. Interacts with ASS1. Interaction is enhanced by low NADPH/NADP(+) ratios, which results in inhibition of ASS1 activity.

It is found in the cytoplasm. Its subcellular location is the perinuclear region. The protein localises to the nucleus. Functionally, redox sensor protein. Undergoes restructuring and subcellular redistribution in response to changes in intracellular NADPH/NADP(+) levels. At low NADPH concentrations the protein is found mainly as a monomer, and binds argininosuccinate synthase (ASS1), the enzyme involved in nitric oxide synthesis. Association with ASS1 impairs its activity and reduces the production of nitric oxide, which subsecuently prevents apoptosis. Under normal NADPH concentrations, the protein is found as a dimer and hides the binding site for ASS1. The homodimer binds one molecule of NADPH. Has higher affinity for NADPH than for NADP(+). Binding to NADPH is necessary to form a stable dimer. This is NmrA-like family domain-containing protein 1 (NMRAL1) from Homo sapiens (Human).